A 1242-amino-acid polypeptide reads, in one-letter code: Membrane-associated phosphatidylinositol transfer protein 1 (1242 aa).

A phosphothreonine mark is found at Thr-59, Thr-282, and Thr-287. The tract at residues 259–330 (CNTGSEGPEA…HGGGVSPQSL (72 aa)) is disordered. Residues 272 to 282 (GKPSTETQPGT) show a composition bias toward polar residues. Low complexity predominate over residues 299 to 319 (ASPDASFGKQWSSSSRSSYSS). Residues Ser-300, Ser-304, Ser-319, Ser-326, Ser-329, Ser-342, Ser-345, Ser-346, and Ser-373 each carry the phosphoserine modification. Position 382 is a phosphoserine; by CDK1 (Ser-382). The segment covering 581-593 (AGTGSRGSSRRGS) has biased composition (low complexity). A disordered region spans residues 581-678 (AGTGSRGSSR…PASSEAPDGP (98 aa)). Residues Ser-593, Ser-600, and Ser-621 each carry the phosphoserine modification. Over residues 643-656 (GSQNSLQVAPTVTS) the composition is skewed to polar residues. One can recognise a DDHD domain in the interval 684–878 (LDFKVSGFFL…VAFILRQVIE (195 aa)). Ser-894 is subject to Phosphoserine. The tract at residues 1207-1242 (RSRGPSQVDLEGPGTPPTTLARGKTRSISLKLDSEE) is disordered. Arg-1209 is modified (omega-N-methylarginine). A Phosphoserine modification is found at Ser-1235.

It belongs to the PtdIns transfer protein family. PI transfer class IIA subfamily. Interacts with PIK4CA and VAPB. Interacts with PTK2B via its C-terminus. Interacts with RHOA. Has higher affinity for the inactive, GDP-bound form of RHOA. The CDK1-phosphorylated form interacts with PLK1. Phosphorylated on multiple sites by CDK1 at the onset of mitosis. Phosphorylation facilitates dissociation from the Golgi complex and is required for interaction with PLK1. Post-translationally, phosphorylated on threonine residues upon treatment with oleic acid. In terms of processing, phosphorylated on tyrosine residues by PTK2B.

It is found in the cytoplasm. The protein resides in the golgi apparatus. The protein localises to the golgi stack membrane. Its subcellular location is the endoplasmic reticulum membrane. It localises to the lipid droplet. It is found in the cleavage furrow. The protein resides in the midbody. It catalyses the reaction a 1,2-diacyl-sn-glycero-3-phospho-(1D-myo-inositol)(in) = a 1,2-diacyl-sn-glycero-3-phospho-(1D-myo-inositol)(out). Catalyzes the transfer of phosphatidylinositol (PI) between membranes. Binds PI, phosphatidylcholine (PC) and phosphatidic acid (PA) with the binding affinity order of PI &gt; PA &gt; PC. Regulates RHOA activity, and plays a role in cytoskeleton remodeling. Necessary for normal completion of cytokinesis. Plays a role in maintaining normal diacylglycerol levels in the Golgi apparatus. Necessary for maintaining the normal structure of the endoplasmic reticulum and the Golgi apparatus. Required for protein export from the endoplasmic reticulum and the Golgi. Binds calcium ions. In Rattus norvegicus (Rat), this protein is Membrane-associated phosphatidylinositol transfer protein 1 (Pitpnm1).